The chain runs to 193 residues: Major structural subunit of bundle-forming pilus (193 aa).

A propeptide spans 1 to 13 (leader sequence); it reads MVSKIMNKKYEKG. The residue at position 14 (Leu14) is an N-methylleucine. The helical transmembrane segment at 14–35 threads the bilayer; that stretch reads LSLIESAMVLALAATVTAGVMF. Residues Cys129 and Cys179 are joined by a disulfide bond.

The protein belongs to the N-Me-Phe pilin family. As to quaternary structure, 10 to 100 laterally aligned filaments or bundle-forming pili coalesce into rope-like bundles. These form linkages between the bacteria within the enteropathogenic E.coli (EPEC) microcolonies that are attached to epithelial cells.

The protein localises to the fimbrium. It localises to the membrane. Major component of type IV bundle-forming pili (BFP) that plays a role in adherence to host cells and virulence. This Escherichia coli O127:H6 (strain E2348/69 / EPEC) protein is Major structural subunit of bundle-forming pilus (bfpA).